The primary structure comprises 684 residues: Amino-acid acetyltransferase, mitochondrial (684 aa).

Residues 414 to 439 are disordered; that stretch reads PQDATNSASEPRDPSQLSTVATRRKR. Residues 415 to 434 are compositionally biased toward polar residues; sequence QDATNSASEPRDPSQLSTVA. An N-acetyltransferase domain is found at 505–674; the sequence is GKSRMTLNDP…YEGVCRGIEP (170 aa).

It belongs to the acetyltransferase family.

The protein resides in the mitochondrion. The catalysed reaction is L-glutamate + acetyl-CoA = N-acetyl-L-glutamate + CoA + H(+). It functions in the pathway amino-acid biosynthesis; L-arginine biosynthesis; N(2)-acetyl-L-ornithine from L-glutamate: step 1/4. Its function is as follows. N-acetylglutamate synthase involved in arginine biosynthesis. The protein is Amino-acid acetyltransferase, mitochondrial (ARG2) of Ajellomyces capsulatus (strain NAm1 / WU24) (Darling's disease fungus).